We begin with the raw amino-acid sequence, 307 residues long: Lipid droplet-associated hydrolase (307 aa).

The Nucleophile role is filled by S119. The segment at 157 to 200 is potential amphipathic helix required for binding to lipid droplets; that stretch reads GWVFTKVAMPLYSVFGYIFFSFFNFLPVWLRLMLIQIYFLIFSI. 2 helical membrane-spanning segments follow: residues 166 to 186 and 188 to 208; these read PLYSVFGYIFFSFFNFLPVWL and LMLIQIYFLIFSIPRQFLGTA. Catalysis depends on charge relay system residues D254 and H283.

Belongs to the AB hydrolase superfamily. LDAH family. As to quaternary structure, interacts with the juvenile hormone hydrolase enzymes Jheh1 and Jheh2. Also interacts with Hmu, Cpr, Gp93 and Pvr. Expressed in accessory glands.

Its subcellular location is the lipid droplet. It localises to the endoplasmic reticulum membrane. The catalysed reaction is a cholesterol ester + H2O = cholesterol + a fatty acid + H(+). Probable serine lipid hydrolase associated with lipid droplets. Appears to lack or have very low cholesterol esterase activity. Appears to lack triglyceride lipase activity. Involved in cholesterol and triglyceride homeostasis; stimulates cellular triglyceride accumulation and cellular cholesterol release. Involved in negatively regulating juvenile hormone (JH) and possibly, insulin signaling activities such as triacylglycerols (TAG) storage, and thereby plays a role in the endocrine regulation of organismal growth and survival. Likely functions by enhancing the activity of the JH hydrolase enzymes Jheh1 and Jheh2. Required for lipid droplet positioning and fat storage. The chain is Lipid droplet-associated hydrolase from Drosophila melanogaster (Fruit fly).